Reading from the N-terminus, the 83-residue chain is Carboxysome shell vertex protein CsoS4A (83 aa).

The 78-residue stretch at 1-78 (MKIMQVEKTL…SDLTIIGIID (78 aa)) folds into the BMV domain.

The protein belongs to the CcmL/EutN family. CsoS4 subfamily. As to quaternary structure, homopentamer.

The protein resides in the carboxysome. In terms of biological role, probably forms vertices in the carboxysome, a polyhedral inclusion where RuBisCO (ribulose bisphosphate carboxylase, cbbL-cbbS) is sequestered. Has been modeled to induce curvature upon insertion into an otherwise flat hexagonal layer of major carboxysome subunits. A minor shell protein, only 12 pentamers of CsoS4A/CsoS4B are calculated to be present in each carboxysome. The 2 CsoS4 proteins contribute to the impermeability of the carboxysome to CO(2). Unlike beta-carboxysomes, alpha-carboxysomes (Cb) can form without cargo protein. CsoS2 is essential for Cb formation and is also capable of targeting foreign proteins to the Cb. The Cb shell assembles with the aid of CsoS2; CsoS1A, CsoS1B and CsoS1C form the majority of the shell while CsoS4A and CsoS4B form vertices. CsoS1D forms pseudohexamers that probably control metabolite flux into and out of the shell. The chain is Carboxysome shell vertex protein CsoS4A from Halothiobacillus neapolitanus (strain ATCC 23641 / c2) (Thiobacillus neapolitanus).